A 252-amino-acid polypeptide reads, in one-letter code: 3-dehydroquinate dehydratase (252 aa).

Residues serine 21, glutamate 46–arginine 48, and arginine 82 each bind 3-dehydroquinate. The Proton donor/acceptor role is filled by histidine 143. The active-site Schiff-base intermediate with substrate is the lysine 170. 3-dehydroquinate contacts are provided by arginine 213, serine 232, and glutamine 236.

This sequence belongs to the type-I 3-dehydroquinase family. In terms of assembly, homodimer.

The enzyme catalyses 3-dehydroquinate = 3-dehydroshikimate + H2O. It functions in the pathway metabolic intermediate biosynthesis; chorismate biosynthesis; chorismate from D-erythrose 4-phosphate and phosphoenolpyruvate: step 3/7. In terms of biological role, involved in the third step of the chorismate pathway, which leads to the biosynthesis of aromatic amino acids. Catalyzes the cis-dehydration of 3-dehydroquinate (DHQ) and introduces the first double bond of the aromatic ring to yield 3-dehydroshikimate. This is 3-dehydroquinate dehydratase from Escherichia coli O157:H7.